Here is a 217-residue protein sequence, read N- to C-terminus: 7-cyano-7-deazaguanine synthase (217 aa).

10–20 (FSGGQDSTTCL) serves as a coordination point for ATP. 4 residues coordinate Zn(2+): Cys-185, Cys-194, Cys-197, and Cys-200.

This sequence belongs to the QueC family. In terms of assembly, homodimer. Zn(2+) serves as cofactor.

It carries out the reaction 7-carboxy-7-deazaguanine + NH4(+) + ATP = 7-cyano-7-deazaguanine + ADP + phosphate + H2O + H(+). It participates in purine metabolism; 7-cyano-7-deazaguanine biosynthesis. Catalyzes the ATP-dependent conversion of 7-carboxy-7-deazaguanine (CDG) to 7-cyano-7-deazaguanine (preQ(0)). The sequence is that of 7-cyano-7-deazaguanine synthase from Streptococcus mutans serotype c (strain ATCC 700610 / UA159).